A 64-amino-acid chain; its full sequence is Conotoxin Ts-011 (64 aa).

The signal sequence occupies residues 1–22 (MHCLPVPVILLLLIASTPSVDA). A propeptide spanning residues 23–51 (RPKTKDDVPPASFHGADNANRILRTLWNL) is cleaved from the precursor. An Isoleucine amide modification is found at Ile63.

Belongs to the conotoxin T superfamily. Post-translationally, contains 2 disulfide bonds that can be either 'C1-C3, C2-C4' or 'C1-C4, C2-C3', since these disulfide connectivities have been observed for conotoxins with cysteine framework V (for examples, see AC P0DQQ7 and AC P81755). Expressed by the venom duct.

The protein localises to the secreted. This chain is Conotoxin Ts-011, found in Conus tessulatus (Tessellate cone).